Here is a 201-residue protein sequence, read N- to C-terminus: 3-isopropylmalate dehydratase small subunit (201 aa).

Belongs to the LeuD family. LeuD type 1 subfamily. As to quaternary structure, heterodimer of LeuC and LeuD.

The enzyme catalyses (2R,3S)-3-isopropylmalate = (2S)-2-isopropylmalate. The protein operates within amino-acid biosynthesis; L-leucine biosynthesis; L-leucine from 3-methyl-2-oxobutanoate: step 2/4. Its function is as follows. Catalyzes the isomerization between 2-isopropylmalate and 3-isopropylmalate, via the formation of 2-isopropylmaleate. This chain is 3-isopropylmalate dehydratase small subunit, found in Methylorubrum extorquens (strain ATCC 14718 / DSM 1338 / JCM 2805 / NCIMB 9133 / AM1) (Methylobacterium extorquens).